The chain runs to 340 residues: Delta(1)-pyrroline-2-carboxylate reductase 2 (340 aa).

Ser50 functions as the Charge relay system in the catalytic mechanism. The Proton donor role is filled by His51. Residue Arg55 coordinates substrate. 123–127 (HFSAL) is a binding site for NADP(+). Thr163 is a substrate binding site. 181–183 (DFA) contacts NADP(+). Residue 189–190 (RG) coordinates substrate. Residue Asp191 is the Charge relay system of the active site. Residues 232 to 233 (HK) and 307 to 313 (RLPSQRR) each bind NADP(+).

Belongs to the LDH2/MDH2 oxidoreductase family. In terms of assembly, homodimer.

The enzyme catalyses L-proline + NAD(+) = 1-pyrroline-2-carboxylate + NADH + H(+). The catalysed reaction is L-proline + NADP(+) = 1-pyrroline-2-carboxylate + NADPH + H(+). Catalyzes the reduction of Delta(1)-pyrroline-2-carboxylate (Pyr2C) to L-proline, using NADPH as the electron donor. May be involved in a degradation pathway that converts trans-3-hydroxy-L-proline (t3LHyp) to L-proline. This is Delta(1)-pyrroline-2-carboxylate reductase 2 from Burkholderia multivorans (strain ATCC 17616 / 249).